Consider the following 40-residue polypeptide: Photosystem II reaction center protein X (40 aa).

Residues 10–30 (WSLVWGTVIVVIPVTVGLVFI) traverse the membrane as a helical segment.

The protein belongs to the PsbX family. Type 1 subfamily. As to quaternary structure, PSII is composed of 1 copy each of membrane proteins PsbA, PsbB, PsbC, PsbD, PsbE, PsbF, PsbH, PsbI, PsbJ, PsbK, PsbL, PsbM, PsbT, PsbX, PsbY, PsbZ, Psb30/Ycf12, peripheral proteins PsbO, CyanoQ (PsbQ), PsbU, PsbV and a large number of cofactors. It forms dimeric complexes.

It localises to the cellular thylakoid membrane. Involved in the binding and/or turnover of quinones at the Q(B) site of photosystem II (PSII). PSII is a light-driven water plastoquinone oxidoreductase, using light energy to abstract electrons from H(2)O, generating a proton gradient subsequently used for ATP formation. This chain is Photosystem II reaction center protein X, found in Crocosphaera subtropica (strain ATCC 51142 / BH68) (Cyanothece sp. (strain ATCC 51142)).